The primary structure comprises 470 residues: TNF receptor-associated factor 4 (470 aa).

The segment at 18-58 adopts an RING-type zinc-finger fold; that stretch reads CPLCGKPMREPVQVSTCGHRFCDTCLQEFLSEGVFKCPEDQ. 3 TRAF-type zinc fingers span residues 102–154, 155–208, and 209–266; these read HLNT…EAYE, SHEG…DTIQ, and SHQY…KLAM. Lys-263 is covalently cross-linked (Glycyl lysine isopeptide (Lys-Gly) (interchain with G-Cter in ubiquitin)). Residues 277 to 309 adopt a coiled-coil conformation; the sequence is HLAMMCALVSRQRQELQELRRELEELSVGSDGV. Residues 307 to 462 enclose the MATH domain; it reads DGVLIWKIGS…DDAVFIRAAV (156 aa). At Ser-426 the chain carries Phosphoserine.

It belongs to the TNF receptor-associated factor family. B subfamily. As to quaternary structure, homotrimer. Interacts with LTBR/TNFRSF3, NGFR/TNFRSF16, RPS6KB1 and TGFB1I1. Interacts with SMURF1. Interacts (via TRAF domain) with MAP3K4 (via kinase domain). Interacts with NCF1, TICAM1, IRAK1 and TRAF6, and is probably part of a complex containing TRAF4, NCF1, TICAM1, IRAK1 and TRAF6. Interacts (via MATH domain) with GP6 and GP1BB. Interacts with EGFR (via C-terminal region); this interaction promotes the formation of EGFR asymmetric dimers. Interacts with PKM; this interaction promotes PKM kinase activity. Polyubiquitinated, leading to its proteasomal degradation. Ubiquitinated at Lys-263 by the SCF(FBXL2) complex, leading to its degradation by the proteasome. In terms of tissue distribution, expressed in epithelial cells of thymus, dendritic cells of lymph node, and in the basal cell layer of epithelia such as epidermis, nasopharynx, respiratory tract, salivary gland, and esophagus.

It localises to the cytoplasm. Its subcellular location is the nucleus. It is found in the perinuclear region. The protein resides in the cell junction. The protein localises to the tight junction. It localises to the cell membrane. Its subcellular location is the cytoskeleton. It catalyses the reaction S-ubiquitinyl-[E2 ubiquitin-conjugating enzyme]-L-cysteine + [acceptor protein]-L-lysine = [E2 ubiquitin-conjugating enzyme]-L-cysteine + N(6)-ubiquitinyl-[acceptor protein]-L-lysine.. It participates in protein degradation; proteasomal ubiquitin-dependent pathway. In terms of biological role, adapter protein with E3 ligase activity that is involved in many diverse biological processes including cell proliferation, migration, differentiation, DNA repair, platelet activation or apoptosis. Promotes EGFR-mediated signaling by facilitating the dimerization of EGFR and downstream AKT activation thereby promoting cell proliferation. Ubiquitinates SMURF2 through 'Lys-48'-linked ubiquitin chain leading to SMURF2 degradation through the proteasome and subsequently osteogenic differentiation. Promotes 'Lys-63'-mediated ubiquitination of CHK1 which in turn activates cell cycle arrest and activation of DNA repair. In addition, promotes an atypical 'Lys-29'-linked ubiquitination at the C-terminal end of IRS1 which is crucial for insulin-like growth factor (IGF) signal transduction. Regulates activation of NF-kappa-B in response to signaling through Toll-like receptors. Required for normal skeleton development, and for normal development of the respiratory tract. Required for activation of RPS6KB1 in response to TNF signaling. Modulates TRAF6 functions. Inhibits adipogenic differentiation by activating pyruvate kinase PKM activity and subsequently the beta-catenin signaling pathway. The protein is TNF receptor-associated factor 4 (TRAF4) of Homo sapiens (Human).